Reading from the N-terminus, the 300-residue chain is Lysophosphatidic acid:oleoyl-CoA acyltransferase 1 (300 aa).

The helical transmembrane segment at 33 to 53 (LLGILGVKTIIMLPLIMLYLL) threads the bilayer. Positions 101–106 (CTSPLD) match the HXXXXD motif motif.

It belongs to the 1-acyl-sn-glycerol-3-phosphate acyltransferase family.

The protein localises to the lipid droplet. The protein resides in the endoplasmic reticulum membrane. The catalysed reaction is a 1-acyl-sn-glycero-3-phosphate + an acyl-CoA = a 1,2-diacyl-sn-glycero-3-phosphate + CoA. It catalyses the reaction 1-hexadecanoyl-sn-glycero-3-phosphate + (9Z)-octadecenoyl-CoA = 1-hexadecanoyl-2-(9Z-octadecenoyl)-sn-glycero-3-phosphate + CoA. Acyl-CoA-dependent lysophosphatidic acid acyltransferase with preference for oleoyl-CoA. Involved in triacylglyceride homeostasis and lipid droplet formation. Involved in vacuolar protein sorting. This Saccharomyces cerevisiae (strain ATCC 204508 / S288c) (Baker's yeast) protein is Lysophosphatidic acid:oleoyl-CoA acyltransferase 1.